Here is a 227-residue protein sequence, read N- to C-terminus: MICOS complex subunit MIC19 (227 aa).

A lipid anchor (N-myristoyl glycine) is attached at Gly-2. Residue Ser-29 is modified to Phosphoserine. Residues 34–60 (DRMKETSPSGPKSQRYSGTYGASVSDE) form a disordered region. A compositionally biased stretch (polar residues) spans 39–55 (TSPSGPKSQRYSGTYGA). Tyr-49 carries the phosphotyrosine modification. A phosphoserine mark is found at Ser-50, Ser-56, and Ser-58. Residue Lys-142 is modified to N6-acetyllysine. One can recognise a CHCH domain in the interval 180-222 (HPVCADLQAQILQCYRQNTQQTLSCSALASQYMRCVNQAKQST). Short sequence motifs (cx9C motif) lie at residues 183-193 (CADLQAQILQC) and 204-214 (CSALASQYMRC). 2 disulfide bridges follow: Cys-183/Cys-214 and Cys-193/Cys-204.

The protein belongs to the MICOS complex subunit Mic19 family. Metazoan Mic19 subfamily. Component of the mitochondrial contact site and cristae organizing system (MICOS) complex, composed of at least MICOS10/MIC10, CHCHD3/MIC19, CHCHD6/MIC25, APOOL/MIC27, IMMT/MIC60, APOO/MIC23/MIC26 and MICOS13/MIC13. This complex was also known under the names MINOS or MitOS complex. The MICOS complex associates with mitochondrial outer membrane proteins SAMM50, MTX1 and MTX2 (together described as components of the mitochondrial outer membrane sorting assembly machinery (SAM) complex) and DNAJC11, mitochondrial inner membrane protein TMEM11 and with HSPA9. The MICOS and SAM complexes together with DNAJC11 are part of a large protein complex spanning both membranes termed the mitochondrial intermembrane space bridging (MIB) complex. Interacts with HSPA1A/HSPA1B and OPA1, preferentially with the soluble OPA1 form. Interacts with IMMT/MIC60.

The protein resides in the mitochondrion inner membrane. It is found in the cytoplasm. It localises to the nucleus. Its subcellular location is the mitochondrion. Component of the MICOS complex, a large protein complex of the mitochondrial inner membrane that plays crucial roles in the maintenance of crista junctions, inner membrane architecture, and formation of contact sites to the outer membrane. Has also been shown to function as a transcription factor which binds to the BAG1 promoter and represses BAG1 transcription. Plays an important role in the maintenance of the MICOS complex stability and the mitochondrial cristae morphology. The chain is MICOS complex subunit MIC19 (CHCHD3) from Bos taurus (Bovine).